Consider the following 97-residue polypeptide: Small cell adhesion glycoprotein (97 aa).

Residues 1-36 (MTSLLTTPSPREELMTTPILQPTEALSPEDGASTAL) are Extracellular-facing. Threonine 2 carries an O-linked (GalNAc...) threonine glycan. O-linked (GalNAc...) serine glycosylation occurs at serine 3. Residues threonine 6 and threonine 7 are each glycosylated (O-linked (GalNAc...) threonine). Serine 9 carries an O-linked (GalNAc...) serine glycan. Residues threonine 16, threonine 17, and threonine 23 are each glycosylated (O-linked (GalNAc...) threonine). The chain crosses the membrane as a helical; Signal-anchor for type III membrane protein span at residues 37-57 (IAVVITVVFLTLLSVVILIFF). Topologically, residues 58-97 (YLYKNKGSYVTYEPTEGEPSAIVQMESDLAKGSEKEEYFI) are cytoplasmic.

It belongs to the SMAGP family. In terms of processing, O-glycosylated. The O-glycan is modified with sialic acid residues. As to expression, detected in breast, endometrium, colon and biliary tract. Detected in polarized epithelial structures characterized by cell-cell adhesion (at protein level).

It localises to the cell membrane. The protein localises to the cytoplasmic vesicle membrane. May play a role in epithelial cell-cell contacts. May play a role in tumor invasiveness and metastasis formation. This is Small cell adhesion glycoprotein (SMAGP) from Homo sapiens (Human).